We begin with the raw amino-acid sequence, 314 residues long: Thymidylate synthase (314 aa).

DUMP contacts are provided by residues R21 and 176 to 177; that span reads RR. C196 (nucleophile) is an active-site residue. Residues 216–219, N227, and 257–259 each bind dUMP; these read RSAD and HLY. A (6R)-5,10-methylene-5,6,7,8-tetrahydrofolate-binding site is contributed by D219. S313 is a (6R)-5,10-methylene-5,6,7,8-tetrahydrofolate binding site.

Belongs to the thymidylate synthase family. Bacterial-type ThyA subfamily. Homodimer.

The protein localises to the cytoplasm. It carries out the reaction dUMP + (6R)-5,10-methylene-5,6,7,8-tetrahydrofolate = 7,8-dihydrofolate + dTMP. Its pathway is pyrimidine metabolism; dTTP biosynthesis. Functionally, catalyzes the reductive methylation of 2'-deoxyuridine-5'-monophosphate (dUMP) to 2'-deoxythymidine-5'-monophosphate (dTMP) while utilizing 5,10-methylenetetrahydrofolate (mTHF) as the methyl donor and reductant in the reaction, yielding dihydrofolate (DHF) as a by-product. This enzymatic reaction provides an intracellular de novo source of dTMP, an essential precursor for DNA biosynthesis. The sequence is that of Thymidylate synthase from Listeria monocytogenes serovar 1/2a (strain ATCC BAA-679 / EGD-e).